The chain runs to 477 residues: Metallopeptidase AprA (477 aa).

An N-terminal signal peptide occupies residues 1 to 20 (MSKAKDKAIVSAAQASTAYS). Zn(2+) is bound at residue His-183. Glu-184 is an active-site residue. Residues His-187 and His-193 each coordinate Zn(2+). Ca(2+) is bound by residues Arg-264, Gly-266, Thr-268, Asp-296, Gly-298, Gly-299, Asp-301, Thr-338, Glu-340, Gly-345, Gly-347, Asp-349, Asn-354, Ala-356, Asn-358, Gly-362, Gly-363, Ala-364, Gly-365, Asp-367, Gly-371, Ala-372, Gly-373, Gly-374, Asp-376, Gly-380, Gly-381, Ala-382, Gly-383, Asp-385, Asp-394, Asp-401, Asp-411, Asp-453, Ser-455, and Asp-461. Hemolysin-type calcium-binding repeat units follow at residues 343-360 (FGGA…ANVI), 361-378 (KGGA…ADQL), and 379-391 (WGGA…VFGA).

This sequence belongs to the peptidase M10B family. The cofactor is Ca(2+). Zn(2+) is required as a cofactor.

It is found in the secreted. Is completely inhibited by the metal cation chelators 1,10-phenanthroline and EDTA, but PMSF, pepstatin A and E-64 have no effect on activity. Peptidase able to cleave azocasein and the milk substrates beta-casein and Na-caseinate. Can withstand UHT processing of milk, and is able to spoil UHT milk over the storage period. The chain is Metallopeptidase AprA from Pseudomonas marginalis (Pseudomonas panacis).